A 395-amino-acid chain; its full sequence is Elongation factor Tu (395 aa).

A tr-type G domain is found at 10–204 (KPHCNIGTIG…TVDSYIPDPQ (195 aa)). Residues 19–26 (GHVDHGKT) are G1. Residue 19–26 (GHVDHGKT) participates in GTP binding. Position 26 (Thr26) interacts with Mg(2+). A G2 region spans residues 61–65 (GITIS). Residues 82-85 (DCPG) form a G3 region. GTP-binding positions include 82–86 (DCPGH) and 137–140 (NKCD). The tract at residues 137–140 (NKCD) is G4. The segment at 173 to 175 (SAL) is G5.

This sequence belongs to the TRAFAC class translation factor GTPase superfamily. Classic translation factor GTPase family. EF-Tu/EF-1A subfamily. In terms of assembly, monomer.

Its subcellular location is the cytoplasm. It catalyses the reaction GTP + H2O = GDP + phosphate + H(+). Functionally, GTP hydrolase that promotes the GTP-dependent binding of aminoacyl-tRNA to the A-site of ribosomes during protein biosynthesis. The polypeptide is Elongation factor Tu (Agathobacter rectalis (strain ATCC 33656 / DSM 3377 / JCM 17463 / KCTC 5835 / VPI 0990) (Eubacterium rectale)).